The primary structure comprises 457 residues: NAC domain-containing protein 69 (457 aa).

In terms of domain architecture, NAC spans 4-153; the sequence is DLVGYRFYPT…NYVICQVMYK (150 aa). A DNA-binding region spans residues 107-159; the sequence is IGIKKTLVYYEGRVPKGVWTPWVMHEYHITCLPQDQRNYVICQVMYKGEDGDV. 2 disordered regions span residues 158–180 and 302–332; these read DVPS…SNTV and DSNS…SNRQ. The span at 162-180 shows a compositional bias: polar residues; sequence GGNNSSEPSQSLVSDSNTV. The segment covering 302–311 has biased composition (low complexity); that stretch reads DSNSDAESIS. A compositionally biased stretch (polar residues) spans 312 to 332; it reads ATSYQGTSSPGDDSVGSSNRQ. The chain crosses the membrane as a helical span at residues 421-441; that stretch reads IYLMRMIIGFILLLALISNII.

The protein resides in the membrane. The protein localises to the nucleus. Transcription activator activated by proteolytic cleavage through regulated intramembrane proteolysis (RIP). Involved in salt stress response during seed germination and seedling growth. Binds the auxin-responsive IAA30 gene promoter and may serve as a molecular link that interconnects a developmental feedback loop of auxin signaling with a salt signal transduction pathway during seed germination. This Arabidopsis thaliana (Mouse-ear cress) protein is NAC domain-containing protein 69 (NAC69).